The following is a 422-amino-acid chain: Gamma-glutamyl phosphate reductase (422 aa).

It belongs to the gamma-glutamyl phosphate reductase family.

It localises to the cytoplasm. The catalysed reaction is L-glutamate 5-semialdehyde + phosphate + NADP(+) = L-glutamyl 5-phosphate + NADPH + H(+). It participates in amino-acid biosynthesis; L-proline biosynthesis; L-glutamate 5-semialdehyde from L-glutamate: step 2/2. Its function is as follows. Catalyzes the NADPH-dependent reduction of L-glutamate 5-phosphate into L-glutamate 5-semialdehyde and phosphate. The product spontaneously undergoes cyclization to form 1-pyrroline-5-carboxylate. This is Gamma-glutamyl phosphate reductase from Nitrosomonas eutropha (strain DSM 101675 / C91 / Nm57).